The primary structure comprises 316 residues: Pantothenate kinase (316 aa).

95–102 (GSVAVGKS) contributes to the ATP binding site.

Belongs to the prokaryotic pantothenate kinase family.

Its subcellular location is the cytoplasm. It catalyses the reaction (R)-pantothenate + ATP = (R)-4'-phosphopantothenate + ADP + H(+). The protein operates within cofactor biosynthesis; coenzyme A biosynthesis; CoA from (R)-pantothenate: step 1/5. The chain is Pantothenate kinase from Shewanella loihica (strain ATCC BAA-1088 / PV-4).